Consider the following 351-residue polypeptide: UDP-N-acetylglucosamine--N-acetylmuramyl-(pentapeptide) pyrophosphoryl-undecaprenol N-acetylglucosamine transferase (351 aa).

UDP-N-acetyl-alpha-D-glucosamine-binding positions include 12-14 (TGG), Asn-124, Arg-160, Ser-188, Ile-239, 258-263 (ALTVCE), and Gln-283.

The protein belongs to the glycosyltransferase 28 family. MurG subfamily.

The protein localises to the cell inner membrane. The enzyme catalyses di-trans,octa-cis-undecaprenyl diphospho-N-acetyl-alpha-D-muramoyl-L-alanyl-D-glutamyl-meso-2,6-diaminopimeloyl-D-alanyl-D-alanine + UDP-N-acetyl-alpha-D-glucosamine = di-trans,octa-cis-undecaprenyl diphospho-[N-acetyl-alpha-D-glucosaminyl-(1-&gt;4)]-N-acetyl-alpha-D-muramoyl-L-alanyl-D-glutamyl-meso-2,6-diaminopimeloyl-D-alanyl-D-alanine + UDP + H(+). Its pathway is cell wall biogenesis; peptidoglycan biosynthesis. Its function is as follows. Cell wall formation. Catalyzes the transfer of a GlcNAc subunit on undecaprenyl-pyrophosphoryl-MurNAc-pentapeptide (lipid intermediate I) to form undecaprenyl-pyrophosphoryl-MurNAc-(pentapeptide)GlcNAc (lipid intermediate II). In Glaesserella parasuis serovar 5 (strain SH0165) (Haemophilus parasuis), this protein is UDP-N-acetylglucosamine--N-acetylmuramyl-(pentapeptide) pyrophosphoryl-undecaprenol N-acetylglucosamine transferase.